The chain runs to 262 residues: uncharacterized protein (262 aa).

The BTB domain maps to 5–107 (PLISLDVEGV…MIEHKLRTFC (103 aa)). Residues 182 to 195 (ISLPRNFTHIAHVG) enclose the CRIB domain.

This is an uncharacterized protein from Caenorhabditis elegans.